The sequence spans 190 residues: Membrane protein FAM174A (190 aa).

The N-terminal stretch at 1-29 (MPTRRGCSGPCHFLASAFVLLLLPALNQS) is a signal peptide. Residues Asn-27 and Asn-83 are each glycosylated (N-linked (GlcNAc...) asparagine). At 30–123 (VVLPSTVPRA…NPSDKPMTQR (94 aa)) the chain is on the extracellular side. Positions 37–119 (PRAVQESKPL…AVSPNPSDKP (83 aa)) are disordered. The helical transmembrane segment at 124 to 144 (ALTVLVVVSAAVLVYFVVRTV) threads the bilayer. Topologically, residues 145 to 190 (RMRRRNRKTRRYGVLDTNIENMELTPLEQDDEDDDNTLFDANHPRR) are cytoplasmic. The disordered stretch occupies residues 168 to 190 (LTPLEQDDEDDDNTLFDANHPRR). Residues 172-181 (EQDDEDDDNT) show a composition bias toward acidic residues.

The protein belongs to the FAM174 family.

It localises to the membrane. This chain is Membrane protein FAM174A (Fam174a), found in Rattus norvegicus (Rat).